A 447-amino-acid chain; its full sequence is Sulfoquinovose isomerase (447 aa).

It belongs to the SqvD family.

The enzyme catalyses 6-sulfo-beta-D-quinovose = 6-deoxy-6-sulfo-D-fructose. Part of the sulfo-TK pathway, a D-sulfoquinovose degradation pathway that produces 2-hydroxyethane-1-sulfonate (isethionate). Catalyzes the isomerization of sulfoquinovose (SQ) to 6-deoxy-6-sulfo-D-fructose (SF). This is Sulfoquinovose isomerase from Clostridium sp. (strain MSTE9).